The following is a 232-amino-acid chain: Ribosomal RNA small subunit methyltransferase G (232 aa).

The disordered stretch occupies residues 1 to 24 (MVDTALHPIPGRRTPPHPRSTLPL). S-adenosyl-L-methionine contacts are provided by residues Gly-91, Leu-96, 142–143 (AE), and Arg-160.

It belongs to the methyltransferase superfamily. RNA methyltransferase RsmG family.

It is found in the cytoplasm. Functionally, specifically methylates the N7 position of guanine in position 518 of 16S rRNA. In Corynebacterium efficiens (strain DSM 44549 / YS-314 / AJ 12310 / JCM 11189 / NBRC 100395), this protein is Ribosomal RNA small subunit methyltransferase G.